The sequence spans 224 residues: Mannose-specific lectin 3 (224 aa).

Bulb-type lectin domains follow at residues 2–111 (NNVL…PAAA) and 117–222 (RNVL…VWST). Intrachain disulfides connect cysteine 30/cysteine 52 and cysteine 145/cysteine 170.

Heterotetramer of 2 domain 1 and 2 domain 2 chains arranged as a dimer of domain 1/domain 2 heterodimers.

Functionally, mannose-specific lectin. Has weak agglutinating activity towards trypsin-treated erythrocytes from rabbit but not from human. The polypeptide is Mannose-specific lectin 3 (Crocus vernus (Dutch crocus)).